Reading from the N-terminus, the 404-residue chain is Caspase-1 (404 aa).

Residues 1–91 (MADKVLKDKR…HLAQTLGLSS (91 aa)) enclose the CARD domain. Residues 1–119 (MADKVLKDKR…SLPAFVENMP (119 aa)) constitute a propeptide that is removed on maturation. Catalysis depends on residues H237 and C285. The propeptide occupies 298–316 (SPKASTDSWTHQPLMLQSD). Phosphoserine is present on S302.

The protein belongs to the peptidase C14A family. As to quaternary structure, heterotetramer that consists of two anti-parallel arranged heterodimers, each one formed by a 20 kDa (Caspase-1 subunit p20) and a 10 kDa (Caspase-1 subunit p10) subunit. May be a component of the inflammasome, a protein complex which also includes PYCARD, CARD8 and NLRP2 and whose function would be the activation of pro-inflammatory caspases. Component of the AIM2 PANoptosome complex, a multiprotein complex that drives inflammatory cell death (PANoptosis). Both the p10 and p20 subunits interact with MEFV. Interacts with CARD17P/INCA and CARD18. Interacts with SERPINB1; this interaction regulates CASP1 activity. Heterotetramer that consists of two anti-parallel arranged heterodimers, each one formed by a 20 kDa (Caspase-1 subunit p20) and a 10 kDa (Caspase-1 subunit p10) subunit. The two subunits are derived from the precursor sequence by an autocatalytic mechanism. Post-translationally, ubiquitinated via 'Lys-11'-linked polyubiquitination. Deubiquitinated by USP8.

Its subcellular location is the cytoplasm. It is found in the cell membrane. The catalysed reaction is Strict requirement for an Asp residue at position P1 and has a preferred cleavage sequence of Tyr-Val-Ala-Asp-|-.. Its function is as follows. Thiol protease involved in a variety of inflammatory processes by proteolytically cleaving other proteins, such as the precursors of the inflammatory cytokines interleukin-1 beta (IL1B) and interleukin 18 (IL18) as well as the pyroptosis inducer Gasdermin-D (GSDMD), into active mature peptides. Plays a key role in cell immunity as an inflammatory response initiator: once activated through formation of an inflammasome complex, it initiates a pro-inflammatory response through the cleavage of the two inflammatory cytokines IL1B and IL18, releasing the mature cytokines which are involved in a variety of inflammatory processes. Cleaves a tetrapeptide after an Asp residue at position P1. Also initiates pyroptosis, a programmed lytic cell death pathway, through cleavage of GSDMD. In contrast to cleavage of interleukin IL1B, recognition and cleavage of GSDMD is not strictly dependent on the consensus cleavage site but depends on an exosite interface on CASP1 that recognizes and binds the Gasdermin-D, C-terminal (GSDMD-CT) part. Cleaves and activates CASP7 in response to bacterial infection, promoting plasma membrane repair. Upon inflammasome activation, during DNA virus infection but not RNA virus challenge, controls antiviral immunity through the cleavage of CGAS, rendering it inactive. In apoptotic cells, cleaves SPHK2 which is released from cells and remains enzymatically active extracellularly. In Canis lupus familiaris (Dog), this protein is Caspase-1 (CASP1).